The following is an 88-amino-acid chain: Acyl carrier protein (88 aa).

Residues Asp4 to Met79 enclose the Carrier domain. Position 39 is an O-(pantetheine 4'-phosphoryl)serine (Ser39).

It belongs to the acyl carrier protein (ACP) family. In terms of processing, 4'-phosphopantetheine is transferred from CoA to a specific serine of apo-ACP by AcpS. This modification is essential for activity because fatty acids are bound in thioester linkage to the sulfhydryl of the prosthetic group.

The protein localises to the cytoplasm. It participates in lipid metabolism; fatty acid biosynthesis. Carrier of the growing fatty acid chain in fatty acid biosynthesis. In Trichodesmium erythraeum (strain IMS101), this protein is Acyl carrier protein.